The following is a 189-amino-acid chain: Haloacid dehalogenase-like hydrolase domain-containing protein 3 (189 aa).

Belongs to the HAD-like hydrolase superfamily.

The sequence is that of Haloacid dehalogenase-like hydrolase domain-containing protein 3 (hdhd3) from Xenopus tropicalis (Western clawed frog).